Reading from the N-terminus, the 313-residue chain is Ribosomal RNA small subunit methyltransferase H (313 aa).

S-adenosyl-L-methionine contacts are provided by residues 35 to 37 (GGH), aspartate 55, phenylalanine 79, aspartate 100, and glutamine 107.

It belongs to the methyltransferase superfamily. RsmH family.

The protein resides in the cytoplasm. The catalysed reaction is cytidine(1402) in 16S rRNA + S-adenosyl-L-methionine = N(4)-methylcytidine(1402) in 16S rRNA + S-adenosyl-L-homocysteine + H(+). Functionally, specifically methylates the N4 position of cytidine in position 1402 (C1402) of 16S rRNA. This chain is Ribosomal RNA small subunit methyltransferase H, found in Burkholderia ambifaria (strain ATCC BAA-244 / DSM 16087 / CCUG 44356 / LMG 19182 / AMMD) (Burkholderia cepacia (strain AMMD)).